The chain runs to 311 residues: Formimidoylglutamase (311 aa).

Mn(2+) contacts are provided by histidine 122, aspartate 151, histidine 153, aspartate 155, cysteine 242, and aspartate 244.

It belongs to the arginase family. Requires Mn(2+) as cofactor.

It catalyses the reaction N-formimidoyl-L-glutamate + H2O = formamide + L-glutamate. Its pathway is amino-acid degradation; L-histidine degradation into L-glutamate; L-glutamate from N-formimidoyl-L-glutamate (hydrolase route): step 1/1. Functionally, catalyzes the conversion of N-formimidoyl-L-glutamate to L-glutamate and formamide. This is Formimidoylglutamase from Pseudomonas aeruginosa (strain UCBPP-PA14).